The primary structure comprises 318 residues: Energy-coupling factor transporter ATP-binding protein EcfA2 (318 aa).

In terms of domain architecture, ABC transporter spans 22 to 271; sequence LRAQGLKCVF…PEIMQTTSIA (250 aa). ATP is bound at residue 59 to 66; that stretch reads GNSGSGKS.

Belongs to the ABC transporter superfamily. Energy-coupling factor EcfA family. As to quaternary structure, forms a stable energy-coupling factor (ECF) transporter complex composed of 2 membrane-embedded substrate-binding proteins (S component), 2 ATP-binding proteins (A component) and 2 transmembrane proteins (T component).

It is found in the cell membrane. ATP-binding (A) component of a common energy-coupling factor (ECF) ABC-transporter complex. Unlike classic ABC transporters this ECF transporter provides the energy necessary to transport a number of different substrates. The sequence is that of Energy-coupling factor transporter ATP-binding protein EcfA2 from Mycoplasmoides gallisepticum (strain R(low / passage 15 / clone 2)) (Mycoplasma gallisepticum).